Here is a 232-residue protein sequence, read N- to C-terminus: Orotidine 5'-phosphate decarboxylase (232 aa).

Residues Asp-11, Lys-33, 60–69 (DLKLYDIPNT), Thr-119, Arg-180, Gln-189, Gly-209, and Arg-210 contribute to the substrate site. The Proton donor role is filled by Lys-62.

The protein belongs to the OMP decarboxylase family. Type 1 subfamily. In terms of assembly, homodimer.

It carries out the reaction orotidine 5'-phosphate + H(+) = UMP + CO2. The protein operates within pyrimidine metabolism; UMP biosynthesis via de novo pathway; UMP from orotate: step 2/2. In terms of biological role, catalyzes the decarboxylation of orotidine 5'-monophosphate (OMP) to uridine 5'-monophosphate (UMP). The protein is Orotidine 5'-phosphate decarboxylase of Wigglesworthia glossinidia brevipalpis.